A 148-amino-acid chain; its full sequence is Cuticle protein 8 (148 aa).

5 consecutive repeat copies span residues 16–19 (AAPA), Ala22, 28–31 (AAPV), 37–40 (AAPA), and 44–47 (AAPV). The 71-residue stretch at 58–128 (YPKYEFNYGV…RTPGTHPVAV (71 aa)) folds into the Chitin-binding type R&amp;R domain.

In terms of biological role, component of the cuticle of migratory locust which contains more than 100 different structural proteins. The chain is Cuticle protein 8 from Locusta migratoria (Migratory locust).